The following is a 347-amino-acid chain: Queuosine 5'-phosphate N-glycosylase/hydrolase (347 aa).

Queuine-binding residues include His-53, Phe-237, Asp-239, Asp-321, and Asp-326. Asp-239 (nucleophile or transition state stabilizer) is an active-site residue.

It belongs to the QNG1 protein family.

The enzyme catalyses queuosine 5'-phosphate + H2O = queuine + D-ribose 5-phosphate. Its function is as follows. Catalyzes the hydrolysis of queuosine 5'-phosphate, releasing the nucleobase queuine (q). Is required for salvage of queuine from exogenous queuosine (Q) that is imported and then converted to queuosine 5'-phosphate intracellularly. The sequence is that of Queuosine 5'-phosphate N-glycosylase/hydrolase from Nematostella vectensis (Starlet sea anemone).